A 423-amino-acid polypeptide reads, in one-letter code: Gamma-glutamyl phosphate reductase (423 aa).

Belongs to the gamma-glutamyl phosphate reductase family.

The protein localises to the cytoplasm. The catalysed reaction is L-glutamate 5-semialdehyde + phosphate + NADP(+) = L-glutamyl 5-phosphate + NADPH + H(+). The protein operates within amino-acid biosynthesis; L-proline biosynthesis; L-glutamate 5-semialdehyde from L-glutamate: step 2/2. Catalyzes the NADPH-dependent reduction of L-glutamate 5-phosphate into L-glutamate 5-semialdehyde and phosphate. The product spontaneously undergoes cyclization to form 1-pyrroline-5-carboxylate. The polypeptide is Gamma-glutamyl phosphate reductase (Paraburkholderia phytofirmans (strain DSM 17436 / LMG 22146 / PsJN) (Burkholderia phytofirmans)).